The following is a 320-amino-acid chain: Ferrochelatase (320 aa).

Positions 194 and 275 each coordinate Fe cation.

This sequence belongs to the ferrochelatase family. In terms of assembly, monomer.

It localises to the cytoplasm. The catalysed reaction is heme b + 2 H(+) = protoporphyrin IX + Fe(2+). It functions in the pathway porphyrin-containing compound metabolism; protoheme biosynthesis; protoheme from protoporphyrin-IX: step 1/1. Functionally, catalyzes the ferrous insertion into protoporphyrin IX. The protein is Ferrochelatase of Escherichia coli O81 (strain ED1a).